We begin with the raw amino-acid sequence, 91 residues long: Probable Fe(2+)-trafficking protein (91 aa).

It belongs to the Fe(2+)-trafficking protein family.

Could be a mediator in iron transactions between iron acquisition and iron-requiring processes, such as synthesis and/or repair of Fe-S clusters in biosynthetic enzymes. This is Probable Fe(2+)-trafficking protein from Cellvibrio japonicus (strain Ueda107) (Pseudomonas fluorescens subsp. cellulosa).